A 61-amino-acid polypeptide reads, in one-letter code: uncharacterized protein (61 aa).

Residues 38-61 (TPRPFTPGLADPRRLGPRRVQAAQ) are disordered.

This is an uncharacterized protein from Homo sapiens (Human).